Consider the following 289-residue polypeptide: Oxygen-dependent coproporphyrinogen-III oxidase (289 aa).

Ser82 contributes to the substrate binding site. The a divalent metal cation site is built by His86 and His96. His96 acts as the Proton donor in catalysis. 98–100 is a binding site for substrate; sequence NYR. His130 and His160 together coordinate a divalent metal cation. An important for dimerization region spans residues 224-259; the sequence is YVEFNLVWDRGTIFGLQTNGRIESILMSMPPLVRWE.

Belongs to the aerobic coproporphyrinogen-III oxidase family. Homodimer. It depends on a divalent metal cation as a cofactor.

The protein localises to the cytoplasm. The catalysed reaction is coproporphyrinogen III + O2 + 2 H(+) = protoporphyrinogen IX + 2 CO2 + 2 H2O. It participates in porphyrin-containing compound metabolism; protoporphyrin-IX biosynthesis; protoporphyrinogen-IX from coproporphyrinogen-III (O2 route): step 1/1. In terms of biological role, involved in the heme and chlorophyll biosynthesis. Catalyzes the aerobic oxidative decarboxylation of propionate groups of rings A and B of coproporphyrinogen-III to yield the vinyl groups in protoporphyrinogen-IX. The protein is Oxygen-dependent coproporphyrinogen-III oxidase of Gloeobacter violaceus (strain ATCC 29082 / PCC 7421).